The primary structure comprises 151 residues: 6,7-dimethyl-8-ribityllumazine synthase (151 aa).

5-amino-6-(D-ribitylamino)uracil-binding positions include Phe15, Thr47–Glu49, and Ala71–Ile73. Position 76–77 (Glu76–Thr77) interacts with (2S)-2-hydroxy-3-oxobutyl phosphate. The Proton donor role is filled by His79. Leu104 lines the 5-amino-6-(D-ribitylamino)uracil pocket. Arg119 lines the (2S)-2-hydroxy-3-oxobutyl phosphate pocket.

Belongs to the DMRL synthase family.

The catalysed reaction is (2S)-2-hydroxy-3-oxobutyl phosphate + 5-amino-6-(D-ribitylamino)uracil = 6,7-dimethyl-8-(1-D-ribityl)lumazine + phosphate + 2 H2O + H(+). Its pathway is cofactor biosynthesis; riboflavin biosynthesis; riboflavin from 2-hydroxy-3-oxobutyl phosphate and 5-amino-6-(D-ribitylamino)uracil: step 1/2. In terms of biological role, catalyzes the formation of 6,7-dimethyl-8-ribityllumazine by condensation of 5-amino-6-(D-ribitylamino)uracil with 3,4-dihydroxy-2-butanone 4-phosphate. This is the penultimate step in the biosynthesis of riboflavin. The sequence is that of 6,7-dimethyl-8-ribityllumazine synthase from Metallosphaera sedula (strain ATCC 51363 / DSM 5348 / JCM 9185 / NBRC 15509 / TH2).